Here is a 278-residue protein sequence, read N- to C-terminus: Tryptophan synthase alpha chain (278 aa).

Residues glutamate 50 and aspartate 61 each act as proton acceptor in the active site.

This sequence belongs to the TrpA family. In terms of assembly, tetramer of two alpha and two beta chains.

The enzyme catalyses (1S,2R)-1-C-(indol-3-yl)glycerol 3-phosphate + L-serine = D-glyceraldehyde 3-phosphate + L-tryptophan + H2O. Its pathway is amino-acid biosynthesis; L-tryptophan biosynthesis; L-tryptophan from chorismate: step 5/5. The alpha subunit is responsible for the aldol cleavage of indoleglycerol phosphate to indole and glyceraldehyde 3-phosphate. The chain is Tryptophan synthase alpha chain from Nitrobacter hamburgensis (strain DSM 10229 / NCIMB 13809 / X14).